Consider the following 436-residue polypeptide: Testis-expressed protein 44 (436 aa).

2 stretches are compositionally biased toward acidic residues: residues 1-10 (MTTEPLEDPE) and 45-54 (LPDEVPPEDI). Disordered regions lie at residues 1–142 (MTTE…LTSL) and 165–307 (AENN…SLYG). Polar residues-rich tracts occupy residues 81 to 103 (ASMQIATSMGQNKDRASMQTDTS) and 167 to 195 (NNRTSRSRTVSPSDSQTQEKTSGKSTVSE). Basic and acidic residues predominate over residues 234–247 (EPTKSADQEAEDFK). Over residues 273–289 (QAPPSPNSPADSPPPSP) the composition is skewed to pro residues. Ser-375 bears the Phosphoserine mark.

The protein resides in the cytoplasm. The polypeptide is Testis-expressed protein 44 (Tex44) (Rattus norvegicus (Rat)).